The following is a 149-amino-acid chain: D-aminoacyl-tRNA deacylase (149 aa).

The Gly-cisPro motif, important for rejection of L-amino acids motif lies at G137 to P138.

This sequence belongs to the DTD family. As to quaternary structure, homodimer.

It is found in the cytoplasm. The enzyme catalyses glycyl-tRNA(Ala) + H2O = tRNA(Ala) + glycine + H(+). It catalyses the reaction a D-aminoacyl-tRNA + H2O = a tRNA + a D-alpha-amino acid + H(+). Functionally, an aminoacyl-tRNA editing enzyme that deacylates mischarged D-aminoacyl-tRNAs. Also deacylates mischarged glycyl-tRNA(Ala), protecting cells against glycine mischarging by AlaRS. Acts via tRNA-based rather than protein-based catalysis; rejects L-amino acids rather than detecting D-amino acids in the active site. By recycling D-aminoacyl-tRNA to D-amino acids and free tRNA molecules, this enzyme counteracts the toxicity associated with the formation of D-aminoacyl-tRNA entities in vivo and helps enforce protein L-homochirality. This is D-aminoacyl-tRNA deacylase from Clostridium perfringens (strain ATCC 13124 / DSM 756 / JCM 1290 / NCIMB 6125 / NCTC 8237 / Type A).